Consider the following 105-residue polypeptide: Large ribosomal subunit protein bL21c (105 aa).

This sequence belongs to the bacterial ribosomal protein bL21 family. Part of the 50S ribosomal subunit.

It is found in the plastid. The protein resides in the chloroplast. In terms of biological role, this protein binds to 23S rRNA. In Trieres chinensis (Marine centric diatom), this protein is Large ribosomal subunit protein bL21c.